The following is a 320-amino-acid chain: MGARVIDGRPIAGELKKRVASEVEGLAARGVRPGLATVLVGEDYAARAYERRVGGLAAELGCRYVCERLPREAEEADVLAVVGKLNADPRVSGILVLRPLPGHISEPAVFSALDPLKDIEAVHPVNAGLLALGRPRYVPSTPAACFYLLDRYLERSGRPPEEFYPRSTVVVVGRSNNVGKPAVSLGFARGAAVISCDANAYRAGRLREHTLKADALIVAAGVAGLIDESYVREGVIAVDVGINPVADPGGSGRTLLVGDLDFGSVARKAEALTPVPGGVGPITDVWLLKNTVAAGRGLAFRARSGGERGAPGISGGYGGQ.

NADP(+) contacts are provided by residues 173 to 175 (GRS) and I242.

It belongs to the tetrahydrofolate dehydrogenase/cyclohydrolase family. As to quaternary structure, homodimer.

The enzyme catalyses (6R)-5,10-methylene-5,6,7,8-tetrahydrofolate + NADP(+) = (6R)-5,10-methenyltetrahydrofolate + NADPH. It catalyses the reaction (6R)-5,10-methenyltetrahydrofolate + H2O = (6R)-10-formyltetrahydrofolate + H(+). It participates in one-carbon metabolism; tetrahydrofolate interconversion. Functionally, catalyzes the oxidation of 5,10-methylenetetrahydrofolate to 5,10-methenyltetrahydrofolate and then the hydrolysis of 5,10-methenyltetrahydrofolate to 10-formyltetrahydrofolate. The protein is Bifunctional protein FolD 2 of Rubrobacter xylanophilus (strain DSM 9941 / JCM 11954 / NBRC 16129 / PRD-1).